Consider the following 149-residue polypeptide: Large ribosomal subunit protein bL9 (149 aa).

Belongs to the bacterial ribosomal protein bL9 family.

In terms of biological role, binds to the 23S rRNA. This is Large ribosomal subunit protein bL9 from Bacillus pumilus (strain SAFR-032).